The sequence spans 590 residues: (-)-alpha-terpineol synthase (590 aa).

Aspartate 339, aspartate 343, aspartate 483, threonine 487, and glutamate 491 together coordinate Mg(2+). A DDXXD motif motif is present at residues 339-343 (DDVYD).

The protein belongs to the terpene synthase family. Mg(2+) is required as a cofactor.

It carries out the reaction (2E)-geranyl diphosphate + H2O = (S)-alpha-terpineol + diphosphate. It functions in the pathway secondary metabolite biosynthesis; terpenoid biosynthesis. Its function is as follows. Mediates the conversion of geranyl diphosphate into alpha-terpineol, a monoterpenol. Monoterpenols contribute to the final grape and wine aroma and flavor. Also forms some 1,8-cineole and traces of other monoterpenoids. The polypeptide is (-)-alpha-terpineol synthase (Vitis vinifera (Grape)).